A 489-amino-acid chain; its full sequence is Glycogen synthase (489 aa).

Lys15 is a binding site for ADP-alpha-D-glucose.

Belongs to the glycosyltransferase 1 family. Bacterial/plant glycogen synthase subfamily.

The enzyme catalyses [(1-&gt;4)-alpha-D-glucosyl](n) + ADP-alpha-D-glucose = [(1-&gt;4)-alpha-D-glucosyl](n+1) + ADP + H(+). Its pathway is glycan biosynthesis; glycogen biosynthesis. Synthesizes alpha-1,4-glucan chains using ADP-glucose. This Francisella tularensis subsp. holarctica (strain FTNF002-00 / FTA) protein is Glycogen synthase.